The primary structure comprises 78 residues: MDELFLRMRALVAEKLEVEEASITLDSSFRGDLGADSLDTYELVYAIEEEMGITIPDEKANEFETVRDAYEFIKSKVT.

Positions 2 to 77 (DELFLRMRAL…DAYEFIKSKV (76 aa)) constitute a Carrier domain. Ser37 is modified (O-(pantetheine 4'-phosphoryl)serine).

The protein belongs to the acyl carrier protein (ACP) family. In terms of processing, 4'-phosphopantetheine is transferred from CoA to a specific serine of apo-ACP by AcpS. This modification is essential for activity because fatty acids are bound in thioester linkage to the sulfhydryl of the prosthetic group.

It is found in the cytoplasm. The protein operates within lipid metabolism; fatty acid biosynthesis. Functionally, carrier of the growing fatty acid chain in fatty acid biosynthesis. This chain is Acyl carrier protein, found in Treponema pallidum (strain Nichols).